We begin with the raw amino-acid sequence, 149 residues long: MYATMESVRLQSEAQQLAEMILQSETAENYRNCYKRLQEDEEAGRIIRSFIKIKEQYEDVQRFGKYHPDYREISRKMREIKRELDLNDKVADFKRAENELQSILDEVSVEIGTAVSEHVKVPTGNPYFDGLSSCGGGCGSGGSCGCKVS.

The protein localises to the cytoplasm. Its function is as follows. Regulates sporulation prior to stage II. Positively controls the competence regulator ComK at a post-transcriptional level. May modulate the translation, stability or activity of ComS. May work together with YmcA to regulate community development. This chain is Regulatory protein YlbF (ylbF), found in Bacillus subtilis (strain 168).